A 525-amino-acid polypeptide reads, in one-letter code: Probable malate:quinone oxidoreductase (525 aa).

The protein belongs to the MQO family. FAD serves as cofactor.

The catalysed reaction is (S)-malate + a quinone = a quinol + oxaloacetate. The protein operates within carbohydrate metabolism; tricarboxylic acid cycle; oxaloacetate from (S)-malate (quinone route): step 1/1. The polypeptide is Probable malate:quinone oxidoreductase (Serratia proteamaculans (strain 568)).